The sequence spans 231 residues: 7-cyano-7-deazaguanine synthase (231 aa).

7 to 17 (LSSGLDSVAAL) is an ATP binding site. Zn(2+)-binding residues include cysteine 195, cysteine 203, cysteine 206, and cysteine 209.

It belongs to the QueC family. It depends on Zn(2+) as a cofactor.

The enzyme catalyses 7-carboxy-7-deazaguanine + NH4(+) + ATP = 7-cyano-7-deazaguanine + ADP + phosphate + H2O + H(+). It participates in purine metabolism; 7-cyano-7-deazaguanine biosynthesis. Functionally, catalyzes the ATP-dependent conversion of 7-carboxy-7-deazaguanine (CDG) to 7-cyano-7-deazaguanine (preQ(0)). The protein is 7-cyano-7-deazaguanine synthase of Methanosarcina barkeri (strain Fusaro / DSM 804).